Reading from the N-terminus, the 414-residue chain is Probable uracil permease (414 aa).

Over 1–14 (MTNQIPPSLAENQS) the chain is Cytoplasmic. A helical membrane pass occupies residues 15–38 (KLKQSFVGLQMLFVAFGALVLVPL). The Periplasmic portion of the chain corresponds to 39 to 42 (ITGL). A helical transmembrane segment spans residues 43-62 (DSNTALLTAGVGTLLFQFCT). Topologically, residues 63–65 (GKQ) are cytoplasmic. A discontinuously helical membrane pass occupies residues 66–82 (VPIFLASSFAFIAPIQY). Phenylalanine 74 lines the uracil pocket. Residues 83–91 (GVQTWGIAT) lie on the Periplasmic side of the membrane. A helical transmembrane segment spans residues 92–112 (TMGGLAFTGLVYFALSTLVKL). Residues 113 to 124 (RGAEALQRFFPP) are Cytoplasmic-facing. Residues 125-146 (VVVGPVIIIIGMGLAPIAVDMS) traverse the membrane as a helical segment. Over 147 to 155 (LGKNSAYAY) the chain is Periplasmic. Residues 156 to 171 (NDAVLVSMVTLLTTLS) form a helical membrane-spanning segment. The Cytoplasmic portion of the chain corresponds to 172–178 (VAVFAKG). Residues 179–199 (LMKLIPIMFGITAGYILCLFL) form a helical membrane-spanning segment. Topologically, residues 200–224 (GLINFQPVIDAPWFSLPKLTTPEFN) are periplasmic. The chain crosses the membrane as a helical span at residues 225–248 (LEAILYMLPIAIAPAVEHVGGIMA). Glutamate 241 provides a ligand contact to uracil. The Cytoplasmic portion of the chain corresponds to 249 to 261 (ISSVTGKDFLKKP). A helical transmembrane segment spans residues 262–281 (GLHRTLLGDGIATAAASLVG). Residues 282-298 (GPPNTTYAEVTGAVMLT) traverse the membrane as a discontinuously helical segment. Position 290 (glutamate 290) interacts with uracil. At 299 to 301 (RNF) the chain is on the cytoplasmic side. A helical transmembrane segment spans residues 302–319 (NPNIMTWAAVWAIAISFC). At 320–332 (GKVGAFLSTIPTI) the chain is on the periplasmic side. Residues 333-354 (VMGGIMMLVFGSIAVVGMSTLI) traverse the membrane as a helical segment. The Cytoplasmic portion of the chain corresponds to 355–365 (RGKVDVTEARN). An intramembrane region (discontinuously helical) is located at residues 366–401 (LCIISVVMTFGIGNMFVDVGNVSLKGISLCAIVAII). Residues 402–414 (LNLVLPKAKNEVE) are Cytoplasmic-facing.

Belongs to the nucleobase:cation symporter-2 (NCS2) (TC 2.A.40) family.

It is found in the cell inner membrane. It carries out the reaction uracil(in) + H(+)(in) = uracil(out) + H(+)(out). Its function is as follows. Transport of uracil in the cell. The sequence is that of Probable uracil permease (uraA) from Haemophilus influenzae (strain ATCC 51907 / DSM 11121 / KW20 / Rd).